The primary structure comprises 536 residues: Phosphoenolpyruvate carboxykinase (ATP) (536 aa).

Substrate is bound by residues arginine 61, tyrosine 195, and lysine 201. ATP-binding positions include lysine 201, histidine 220, and 236 to 244; that span reads GLSGTGKTT. Lysine 201 and histidine 220 together coordinate Mn(2+). Residue aspartate 257 coordinates Mn(2+). Glutamate 285, arginine 322, and threonine 447 together coordinate ATP. Arginine 322 provides a ligand contact to substrate.

It belongs to the phosphoenolpyruvate carboxykinase (ATP) family. It depends on Mn(2+) as a cofactor.

The protein resides in the cytoplasm. The enzyme catalyses oxaloacetate + ATP = phosphoenolpyruvate + ADP + CO2. The protein operates within carbohydrate biosynthesis; gluconeogenesis. Involved in the gluconeogenesis. Catalyzes the conversion of oxaloacetate (OAA) to phosphoenolpyruvate (PEP) through direct phosphoryl transfer between the nucleoside triphosphate and OAA. This Rhizobium leguminosarum bv. trifolii (strain WSM2304) protein is Phosphoenolpyruvate carboxykinase (ATP).